Reading from the N-terminus, the 531-residue chain is Pyruvate kinase (531 aa).

Residue R86 coordinates substrate. N88, S90, D121, and T122 together coordinate K(+). Residue 88–91 participates in ATP binding; sequence NFSH. ATP contacts are provided by R128 and K211. E277 is a Mg(2+) binding site. G300, D301, and T333 together coordinate substrate. D301 is a Mg(2+) binding site.

It belongs to the pyruvate kinase family. As to quaternary structure, homotetramer. Mg(2+) is required as a cofactor. The cofactor is K(+).

It carries out the reaction pyruvate + ATP = phosphoenolpyruvate + ADP + H(+). Its pathway is carbohydrate degradation; glycolysis; pyruvate from D-glyceraldehyde 3-phosphate: step 5/5. The polypeptide is Pyruvate kinase (PYK) (Eimeria tenella (Coccidian parasite)).